A 183-amino-acid polypeptide reads, in one-letter code: ADP-ribosylation factor 3 (183 aa).

Gly2 carries the N-myristoyl glycine lipid modification. Residues 24-31 (GLDKAGKT), 67-71 (DVGGQ), and 126-129 (NKQD) each bind GTP.

The protein belongs to the small GTPase superfamily. Arf family. In terms of assembly, interacts with RUD3.

Its subcellular location is the golgi apparatus. GTP-binding protein involved in protein trafficking; may modulate vesicle budding and uncoating within the Golgi apparatus. This Saccharomyces cerevisiae (strain ATCC 204508 / S288c) (Baker's yeast) protein is ADP-ribosylation factor 3 (ARF3).